Consider the following 700-residue polypeptide: MAGIAAKLVKDREAAEGLGSHERAIKYLNQDYEALRNECLEAGTLFQDPSFPAIPSALGFKELGPYSSKTRGIEWKRPTEICADPQFIIGGATRTDICQGALGDCWLLAAIASLTLNEEILARVVPLNQSFQENYAGIFHFQFWQYGEWVEVVVDDRLPTKDGELLFVHSAEGSEFWSALLEKAYAKINGCYEALSGGATTEGFEDFTGGIAEWYELKKPPPNLFKIIQKALQKGSLLGCSIDITSAADSEAITYQKLVKGHAYSVTGAEEVESSGSLQKLIRIRNPWGEVEWTGRWNDNCPSWNTIDPEERERLTRRHEDGEFWMSFSDFLRHYSRLEICNLTPDTLTSDTYKKWKLTKMDGNWRRGSTAGGCRNYPNTFWMNPQYLIKLEEEDEDEEDGESGCTFLVGLIQKHRRRQRKMGEDMHTIGFGIYEVPEELSGQTNIHLSKNFFLTNRARERSDTFINLREVLNRFKLPPGEYILVPSTFEPNKDGDFCIRVFSEKKADYQAVDDEIEANLEEFDISEDDIDDGFRRLFAQLAGEDAEISAFELQTILRRVLAKRQDIKSDGFSIETCKIMVDMLDSDGSGKLGLKEFYILWTKIQKYQKIYREIDVDRSGTMNSYEMRKALEEAGFKMPCQLHQVIVARFADDQLIIDFDNFVRCLVRLETLFKIFKQLDPENTGTIELDLISWLCFSVL.

A2 is subject to N-acetylalanine. A propeptide spans 2 to 19 (anchors to the small subunit); it reads AGIAAKLVKDREAAEGLG. Residues 45-344 enclose the Calpain catalytic domain; the sequence is LFQDPSFPAI…YSRLEICNLT (300 aa). Positions 89, 91, and 96 each coordinate Ca(2+). The active site involves C105. Ca(2+) is bound by residues E175, Q229, and K230. Catalysis depends on residues H262 and N286. 3 residues coordinate Ca(2+): E292, D299, and E323. The tract at residues 345 to 514 is domain III; sequence PDTLTSDTYK…KKADYQAVDD (170 aa). The interval 515–529 is linker; it reads EIEANLEEFDISEDD. Residues 530-700 form a domain IV region; it reads IDDGFRRLFA…LISWLCFSVL (171 aa). The Ca(2+) site is built by A542, D545, E547, E552, D585, D587, S589, K591, E596, D615, D617, S619, T621, E626, D658, and N661. EF-hand domains are found at residues 572-605 and 602-637; these read FSIE…TKIQ and TKIQ…AGFK. The 34-residue stretch at 667-700 folds into the EF-hand 3 domain; sequence VRLETLFKIFKQLDPENTGTIELDLISWLCFSVL.

This sequence belongs to the peptidase C2 family. Forms a heterodimer with a small (regulatory) subunit (CAPNS1). Interacts with CPEB3; this leads to cleavage of CPEB3. It depends on Ca(2+) as a cofactor.

It localises to the cytoplasm. It is found in the cell membrane. It carries out the reaction Broad endopeptidase specificity.. With respect to regulation, activated by 200-1000 micromolar concentrations of calcium and inhibited by calpastatin. Functionally, calcium-regulated non-lysosomal thiol-protease which catalyzes limited proteolysis of substrates involved in cytoskeletal remodeling and signal transduction. Proteolytically cleaves MYOC at 'Arg-226'. Proteolytically cleaves CPEB3 following neuronal stimulation which abolishes CPEB3 translational repressor activity, leading to translation of CPEB3 target mRNAs. The protein is Calpain-2 catalytic subunit (CAPN2) of Macaca fascicularis (Crab-eating macaque).